Reading from the N-terminus, the 278-residue chain is Indole-3-glycerol phosphate synthase (278 aa).

This sequence belongs to the TrpC family.

The enzyme catalyses 1-(2-carboxyphenylamino)-1-deoxy-D-ribulose 5-phosphate + H(+) = (1S,2R)-1-C-(indol-3-yl)glycerol 3-phosphate + CO2 + H2O. The protein operates within amino-acid biosynthesis; L-tryptophan biosynthesis; L-tryptophan from chorismate: step 4/5. This Pseudomonas aeruginosa (strain LESB58) protein is Indole-3-glycerol phosphate synthase.